Reading from the N-terminus, the 173-residue chain is Putative metal-dependent hydrolase BCE_2729 (173 aa).

H65, H156, and H160 together coordinate Zn(2+).

The protein belongs to the metal hydrolase YfiT family. Homodimer. Requires Zn(2+) as cofactor.

The protein resides in the cytoplasm. Possible metal-dependent hydrolase. This chain is Putative metal-dependent hydrolase BCE_2729, found in Bacillus cereus (strain ATCC 10987 / NRS 248).